The chain runs to 166 residues: uncharacterized protein (166 aa).

Composition is skewed to gly residues over residues 1–10 (MNYGNNGGGQ) and 76–86 (YRGGGGGGGGN). The interval 1 to 117 (MNYGNNGGGQ…GGGNKNFGPI (117 aa)) is disordered.

This is an uncharacterized protein from Caenorhabditis elegans.